A 310-amino-acid polypeptide reads, in one-letter code: Protein-L-isoaspartate O-methyltransferase (310 aa).

Disordered stretches follow at residues 1–44 (MSGE…DKPA) and 67–88 (AKPATAPKPTAPKPALPKPAAP). Basic and acidic residues predominate over residues 14–29 (EDLKRAPRKSEGRPGE). The segment covering 32–44 (AAGAVPKAADKPA) has biased composition (low complexity). The segment covering 75–86 (PTAPKPALPKPA) has biased composition (pro residues). The active site involves serine 157.

The protein belongs to the methyltransferase superfamily. L-isoaspartyl/D-aspartyl protein methyltransferase family.

It is found in the cytoplasm. It catalyses the reaction [protein]-L-isoaspartate + S-adenosyl-L-methionine = [protein]-L-isoaspartate alpha-methyl ester + S-adenosyl-L-homocysteine. Its function is as follows. Catalyzes the methyl esterification of L-isoaspartyl residues in peptides and proteins that result from spontaneous decomposition of normal L-aspartyl and L-asparaginyl residues. It plays a role in the repair and/or degradation of damaged proteins. The sequence is that of Protein-L-isoaspartate O-methyltransferase from Burkholderia orbicola (strain MC0-3).